The following is a 697-amino-acid chain: Transmembrane protein 168 (697 aa).

A run of 3 helical transmembrane segments spans residues 36–56, 63–83, and 89–109; these read LGYL…YVRW, LILV…ILYY, and AASL…LCFL. A glycan (N-linked (GlcNAc...) asparagine) is linked at asparagine 111. Transmembrane regions (helical) follow at residues 172-192, 199-219, 223-243, 265-285, 293-313, 352-372, and 380-400; these read MLVE…MLII, FLAI…SLET, PIAF…DIYF, LSVV…AFKL, FVIP…IIFL, FCLI…ILGA, and GIFL…HGLF. 2 N-linked (GlcNAc...) asparagine glycosylation sites follow: asparagine 533 and asparagine 598. A helical membrane pass occupies residues 646-666; sequence ITYPLVHLANWLCGLNLFWIC.

It belongs to the TMEM168 family.

It localises to the nucleus membrane. Plays a key role in maintaining the cardiac electrical stability by modulating cell surface expression of SCN5A. May play a role in the modulation of anxiety behavior by regulating GABAergic neuronal system in the nucleus accumbens. This chain is Transmembrane protein 168, found in Homo sapiens (Human).